The primary structure comprises 149 residues: Deoxyuridine 5'-triphosphate nucleotidohydrolase (149 aa).

Substrate is bound by residues 68-70 (RSG), asparagine 81, and 85-87 (LID).

Belongs to the dUTPase family. It depends on Mg(2+) as a cofactor.

It catalyses the reaction dUTP + H2O = dUMP + diphosphate + H(+). The protein operates within pyrimidine metabolism; dUMP biosynthesis; dUMP from dCTP (dUTP route): step 2/2. This enzyme is involved in nucleotide metabolism: it produces dUMP, the immediate precursor of thymidine nucleotides and it decreases the intracellular concentration of dUTP so that uracil cannot be incorporated into DNA. The protein is Deoxyuridine 5'-triphosphate nucleotidohydrolase of Aromatoleum aromaticum (strain DSM 19018 / LMG 30748 / EbN1) (Azoarcus sp. (strain EbN1)).